The sequence spans 176 residues: 3-hydroxydecanoyl-[acyl-carrier-protein] dehydratase (176 aa).

Histidine 75 is an active-site residue.

It belongs to the thioester dehydratase family. FabA subfamily. As to quaternary structure, homodimer.

The protein localises to the cytoplasm. The enzyme catalyses a (3R)-hydroxyacyl-[ACP] = a (2E)-enoyl-[ACP] + H2O. It catalyses the reaction (3R)-hydroxydecanoyl-[ACP] = (2E)-decenoyl-[ACP] + H2O. The catalysed reaction is (2E)-decenoyl-[ACP] = (3Z)-decenoyl-[ACP]. It functions in the pathway lipid metabolism; fatty acid biosynthesis. Its function is as follows. Necessary for the introduction of cis unsaturation into fatty acids. Catalyzes the dehydration of (3R)-3-hydroxydecanoyl-ACP to E-(2)-decenoyl-ACP and then its isomerization to Z-(3)-decenoyl-ACP. Can catalyze the dehydratase reaction for beta-hydroxyacyl-ACPs with saturated chain lengths up to 16:0, being most active on intermediate chain length. The sequence is that of 3-hydroxydecanoyl-[acyl-carrier-protein] dehydratase from Glaesserella parasuis serovar 5 (strain SH0165) (Haemophilus parasuis).